The chain runs to 108 residues: Large ribosomal subunit protein uL22 (108 aa).

It belongs to the universal ribosomal protein uL22 family. In terms of assembly, part of the 50S ribosomal subunit.

In terms of biological role, this protein binds specifically to 23S rRNA; its binding is stimulated by other ribosomal proteins, e.g. L4, L17, and L20. It is important during the early stages of 50S assembly. It makes multiple contacts with different domains of the 23S rRNA in the assembled 50S subunit and ribosome. The globular domain of the protein is located near the polypeptide exit tunnel on the outside of the subunit, while an extended beta-hairpin is found that lines the wall of the exit tunnel in the center of the 70S ribosome. This is Large ribosomal subunit protein uL22 from Nitratiruptor sp. (strain SB155-2).